Reading from the N-terminus, the 122-residue chain is Pollen allergen Phl p 2 (122 aa).

The first 26 residues, 1–26 (MSMASSSSSSLLAMAVLAALFAGAWC), serve as a signal peptide directing secretion. The Expansin-like CBD domain maps to 41-120 (KHLAVLVKYE…KYTIGATYAP (80 aa)).

This sequence belongs to the expansin family. Expansin B subfamily. Pollen specific.

It localises to the secreted. The sequence is that of Pollen allergen Phl p 2 (PHLPII) from Phleum pratense (Common timothy).